The sequence spans 97 residues: MGKKKKEKLSVAREIDGMEEKVALCKYNLDVIDVKLRKMELTEEGRKSLEKEKSSLSSRLSNYERELKSLRHENRKNMLLSVAIFLLFAVGYYCWTL.

The stretch at 36–80 (LRKMELTEEGRKSLEKEKSSLSSRLSNYERELKSLRHENRKNMLL) forms a coiled coil. A helical transmembrane segment spans residues 78 to 95 (MLLSVAIFLLFAVGYYCW).

It localises to the membrane. This Xenopus tropicalis (Western clawed frog) protein is Coiled-coil domain-containing protein 167 (ccdc167).